The chain runs to 128 residues: Sulfurtransferase TusD (128 aa).

Cys78 (cysteine persulfide intermediate) is an active-site residue.

It belongs to the DsrE/TusD family. Heterohexamer, formed by a dimer of trimers. The hexameric TusBCD complex contains 2 copies each of TusB, TusC and TusD. The TusBCD complex interacts with TusE.

Its subcellular location is the cytoplasm. Functionally, part of a sulfur-relay system required for 2-thiolation of 5-methylaminomethyl-2-thiouridine (mnm(5)s(2)U) at tRNA wobble positions. Accepts sulfur from TusA and transfers it in turn to TusE. The chain is Sulfurtransferase TusD from Escherichia coli O127:H6 (strain E2348/69 / EPEC).